A 352-amino-acid chain; its full sequence is MEERNISGRDLRVDSNITYWGTNITAVNESNHTGMSFCEVVSCTMVFLSLIVALVGLVGNATVLWFLGFQMRRNAFSVYILNLAGADFLFICFQIGYCFHMILDIDSIPIEIDLFYLVVLNFPYFCGLSILSAISIERCLSVMWPIWYHCQRPRHTSAVICTLLWVLSLVCSLLEGKECGFLYYTSDPGWCKTFDLITATWLIVLFVALLGSSLALVITIFWGLHKIPVTRLYVAIVFTVLVFLLFGLPYGIYWFLLVWIEKFYYVLPCSIYPVTVFLSCVNSSAKPIIYCLVGSIRHHRFQRKTLKLFLQRAMQDTPEEEECGEMGSSGRSREIKTIWKGLRAALIRHKEL.

The Extracellular portion of the chain corresponds to 1 to 45 (MEERNISGRDLRVDSNITYWGTNITAVNESNHTGMSFCEVVSCTM). N-linked (GlcNAc...) asparagine glycosylation is found at Asn-5, Asn-16, Asn-23, Asn-28, and Asn-31. A helical transmembrane segment spans residues 46-66 (VFLSLIVALVGLVGNATVLWF). At 67–75 (LGFQMRRNA) the chain is on the cytoplasmic side. A helical transmembrane segment spans residues 76–96 (FSVYILNLAGADFLFICFQIG). The Extracellular portion of the chain corresponds to 97 to 107 (YCFHMILDIDS). Residues 108 to 128 (IPIEIDLFYLVVLNFPYFCGL) traverse the membrane as a helical segment. Over 129–155 (SILSAISIERCLSVMWPIWYHCQRPRH) the chain is Cytoplasmic. A helical membrane pass occupies residues 156–176 (TSAVICTLLWVLSLVCSLLEG). Topologically, residues 177–195 (KECGFLYYTSDPGWCKTFD) are extracellular. Residues 196–216 (LITATWLIVLFVALLGSSLAL) form a helical membrane-spanning segment. The Cytoplasmic portion of the chain corresponds to 217 to 239 (VITIFWGLHKIPVTRLYVAIVFT). The helical transmembrane segment at 240-260 (VLVFLLFGLPYGIYWFLLVWI) threads the bilayer. Over 261–275 (EKFYYVLPCSIYPVT) the chain is Extracellular. Residues 276–296 (VFLSCVNSSAKPIIYCLVGSI) form a helical membrane-spanning segment. Residues 297–347 (RHHRFQRKTLKLFLQRAMQDTPEEEECGEMGSSGRSREIKTIWKGLRAALI) are Cytoplasmic-facing.

It belongs to the G-protein coupled receptor 1 family. Mas subfamily.

The protein resides in the cell membrane. In terms of biological role, orphan receptor. Probably involved in the function of nociceptive neurons. May regulate nociceptor function and/or development, including the sensation or modulation of pain. This chain is Mas-related G-protein coupled receptor member X2 (Mrgprx2), found in Mus musculus (Mouse).